A 220-amino-acid polypeptide reads, in one-letter code: N-(5'-phosphoribosyl)anthranilate isomerase (220 aa).

The protein belongs to the TrpF family.

It carries out the reaction N-(5-phospho-beta-D-ribosyl)anthranilate = 1-(2-carboxyphenylamino)-1-deoxy-D-ribulose 5-phosphate. The protein operates within amino-acid biosynthesis; L-tryptophan biosynthesis; L-tryptophan from chorismate: step 3/5. This chain is N-(5'-phosphoribosyl)anthranilate isomerase, found in Leptothrix cholodnii (strain ATCC 51168 / LMG 8142 / SP-6) (Leptothrix discophora (strain SP-6)).